We begin with the raw amino-acid sequence, 117 residues long: Ubiquitin-like protein 3 (117 aa).

The Ubiquitin-like domain maps to 10-88; sequence INLRLILVSG…PFGKTTVMHL (79 aa). C113 is lipidated: S-palmitoyl cysteine. At C114 the chain carries Cysteine methyl ester. Residue C114 is the site of S-geranylgeranyl cysteine attachment. Residues 115 to 117 constitute a propeptide, removed in mature form; the sequence is VIL.

The protein localises to the cell membrane. The polypeptide is Ubiquitin-like protein 3 (Ubl3) (Mus musculus (Mouse)).